Consider the following 235-residue polypeptide: MLVAVEIFGFFLTAVGLLMLGVTLAHSSWRVSTVHGNVITTNTIFENLWYSCATDSMGVHNCWEFPSMLALSGYIQACRALMITAILLGFLGLFLGMVGLRCTNIGGLELSRKTKLAATAGALHILAGICGMVAVSWYAFNITRDFFNPLYAGTKYELGPALYLGWSACLLAILGGICLFSNCCCSRDRDPATGVQLPYKAPVIPAASLAARLPAAASDEEGDSSFGKYGKNAYV.

Position 1 (Met-1) is a topological domain, cytoplasmic. The helical transmembrane segment at Leu-2–Leu-24 threads the bilayer. Residues Ala-25–Tyr-74 lie on the Extracellular side of the membrane. A disulfide bond links Cys-52 and Cys-62. The chain crosses the membrane as a helical span at residues Ile-75–Gly-99. Topologically, residues Leu-100–Lys-115 are cytoplasmic. Position 111 is a phosphoserine (Ser-111). The chain crosses the membrane as a helical span at residues Leu-116–Phe-140. Over Asn-141–Gly-159 the chain is Extracellular. Residues Phe-146–Phe-147 form an important for the formation of tight-junction strand-like structures region. The chain crosses the membrane as a helical span at residues Pro-160–Asn-182. Over Cys-183–Val-235 the chain is Cytoplasmic. Residues Ser-218 and Ser-225 each carry the phosphoserine modification.

This sequence belongs to the claudin family. In terms of assembly, can form homo- and heteropolymeric tight junction strands. Post-translationally, palmitoylated.

The protein resides in the cell junction. It localises to the tight junction. It is found in the cell membrane. It carries out the reaction Na(+)(in) = Na(+)(out). The enzyme catalyses K(+)(in) = K(+)(out). The catalysed reaction is Cs(+)(in) = Cs(+)(out). It catalyses the reaction Rb(+)(in) = Rb(+)(out). It carries out the reaction Li(+)(in) = Li(+)(out). The enzyme catalyses NH4(+)(in) = NH4(+)(out). The catalysed reaction is methylamine(out) = methylamine(in). It catalyses the reaction H2O(in) = H2O(out). Functionally, forms paracellular channels: polymerizes in tight junction strands with cation- and water-selective channels through the strands, conveying epithelial permeability in a process known as paracellular tight junction permeability. In intestinal epithelium, allows for sodium and water fluxes from the peritoneal side to the lumen of the intestine to regulate nutrient absorption and intestinal morphogenesis. The protein is Claudin-15 (CLDN15) of Bos taurus (Bovine).